Here is a 301-residue protein sequence, read N- to C-terminus: Probable splicing factor ECU05_1440 (301 aa).

Residues 1–70 (MQIFIGKIPN…APISVERANG (70 aa)) form the RRM 1 domain. 2 disordered regions span residues 106–140 (PPMRYESRSPGRYDPRFSDRYGGRSPEYRGDSFRM) and 255–301 (SKDE…AEND). 2 stretches are compositionally biased toward basic and acidic residues: residues 110–140 (YESRSPGRYDPRFSDRYGGRSPEYRGDSFRM) and 255–270 (SKDEYKSRERESHMRS). In terms of domain architecture, RRM 2 spans 182 to 255 (LKVVFENIAP…HILKTRSYLS (74 aa)).

This sequence belongs to the splicing factor SR family.

The protein resides in the nucleus. In terms of biological role, plays a role in splicing. The sequence is that of Probable splicing factor ECU05_1440 from Encephalitozoon cuniculi (strain GB-M1) (Microsporidian parasite).